Consider the following 680-residue polypeptide: ATPase family AAA domain-containing protein FIGL1 (680 aa).

Disordered regions lie at residues 214–234 (YGNS…NQDR), 250–275 (FGTK…GAPN), and 288–352 (VRQK…GGKT). Polar residues predominate over residues 295–308 (TESPSSCLSPQSDK). The segment covering 313-323 (RGYGSRSGGLR) has biased composition (gly residues). Residues 336 to 346 (TNGNNVGNLTS) are compositionally biased toward polar residues. ATP-binding positions include Ala406 and 446–451 (GTGKTM).

This sequence belongs to the AAA ATPase family. Mg(2+) serves as cofactor.

The protein resides in the nucleus. The catalysed reaction is ATP + H2O = ADP + phosphate + H(+). Functionally, involved in DNA double-strand break (DBS) repair via homologous recombination (HR). Limits class II meiotic crossover (CO) formation by regulating the invasion step of meiotic HR. May counteract DMC1 and RAD51-mediated inter-homolog strand invasion to limit CO formation. Functions independently of FANCM. This Arabidopsis thaliana (Mouse-ear cress) protein is ATPase family AAA domain-containing protein FIGL1.